The sequence spans 362 residues: Phosphoserine aminotransferase (362 aa).

L-glutamate is bound by residues serine 9 and arginine 42. Pyridoxal 5'-phosphate is bound by residues 76–77 (GR), tryptophan 102, threonine 153, aspartate 174, and glutamine 197. Lysine 198 is subject to N6-(pyridoxal phosphate)lysine. 239–240 (NT) serves as a coordination point for pyridoxal 5'-phosphate.

This sequence belongs to the class-V pyridoxal-phosphate-dependent aminotransferase family. SerC subfamily. In terms of assembly, homodimer. Pyridoxal 5'-phosphate is required as a cofactor.

It localises to the cytoplasm. The enzyme catalyses O-phospho-L-serine + 2-oxoglutarate = 3-phosphooxypyruvate + L-glutamate. The catalysed reaction is 4-(phosphooxy)-L-threonine + 2-oxoglutarate = (R)-3-hydroxy-2-oxo-4-phosphooxybutanoate + L-glutamate. The protein operates within amino-acid biosynthesis; L-serine biosynthesis; L-serine from 3-phospho-D-glycerate: step 2/3. Its pathway is cofactor biosynthesis; pyridoxine 5'-phosphate biosynthesis; pyridoxine 5'-phosphate from D-erythrose 4-phosphate: step 3/5. Catalyzes the reversible conversion of 3-phosphohydroxypyruvate to phosphoserine and of 3-hydroxy-2-oxo-4-phosphonooxybutanoate to phosphohydroxythreonine. The protein is Phosphoserine aminotransferase of Escherichia coli O17:K52:H18 (strain UMN026 / ExPEC).